A 496-amino-acid polypeptide reads, in one-letter code: MFS transporter cpaT (496 aa).

Residues 1–45 (MGHQEEPPRICKTPSGHEQGEGPAEKTSKPSTEEVGWDGPTDPAR) form a disordered region. Residues 18-32 (EQGEGPAEKTSKPST) are compositionally biased toward basic and acidic residues. N48 carries N-linked (GlcNAc...) asparagine glycosylation. The helical transmembrane segment at 58-78 (MGIISYLTFLTPLTSSIVAPA) threads the bilayer. N-linked (GlcNAc...) asparagine glycosylation occurs at N90. Helical transmembrane passes span 93–113 (LASF…LFLA), 130–150 (FIFT…ALLV), 154–174 (FAGI…ADMF), 180–200 (GVAM…GPIA), and 212–232 (WVFW…LFVL). The N-linked (GlcNAc...) asparagine glycan is linked to N252. A run of 6 helical transmembrane segments spans residues 288–308 (VALF…LFTT), 325–345 (GLVY…FGAL), 367–387 (LPPL…YGWS), 395–415 (IMPI…LLPI), 427–449 (AASA…PLAG), and 463–483 (SLLG…YFYG).

The protein belongs to the major facilitator superfamily.

The protein localises to the membrane. Functionally, MFS transporter; part of the gene cluster that mediates the biosynthesis of the fungal neurotoxin cyclopiazonic acid (CPA), a nanomolar inhibitor of Ca(2+)-ATPase with a unique pentacyclic indole tetramic acid scaffold. This is MFS transporter cpaT from Aspergillus oryzae (Yellow koji mold).